The sequence spans 270 residues: Formamidopyrimidine-DNA glycosylase (270 aa).

Residue Pro-2 is the Schiff-base intermediate with DNA of the active site. Residue Glu-3 is the Proton donor of the active site. The active-site Proton donor; for beta-elimination activity is Lys-57. DNA-binding residues include His-90, Arg-109, and Lys-150. The FPG-type zinc finger occupies 235 to 269 (LVYGNKDKPCPRCGTKIKSIIIGQRNSFFCPQCQK). The Proton donor; for delta-elimination activity role is filled by Arg-259.

It belongs to the FPG family. In terms of assembly, monomer. Requires Zn(2+) as cofactor.

It carries out the reaction Hydrolysis of DNA containing ring-opened 7-methylguanine residues, releasing 2,6-diamino-4-hydroxy-5-(N-methyl)formamidopyrimidine.. The catalysed reaction is 2'-deoxyribonucleotide-(2'-deoxyribose 5'-phosphate)-2'-deoxyribonucleotide-DNA = a 3'-end 2'-deoxyribonucleotide-(2,3-dehydro-2,3-deoxyribose 5'-phosphate)-DNA + a 5'-end 5'-phospho-2'-deoxyribonucleoside-DNA + H(+). Its function is as follows. Involved in base excision repair of DNA damaged by oxidation or by mutagenic agents. Acts as a DNA glycosylase that recognizes and removes damaged bases. Has a preference for oxidized purines, such as 7,8-dihydro-8-oxoguanine (8-oxoG). Has AP (apurinic/apyrimidinic) lyase activity and introduces nicks in the DNA strand. Cleaves the DNA backbone by beta-delta elimination to generate a single-strand break at the site of the removed base with both 3'- and 5'-phosphates. The sequence is that of Formamidopyrimidine-DNA glycosylase from Histophilus somni (strain 2336) (Haemophilus somnus).